A 152-amino-acid polypeptide reads, in one-letter code: Nucleoplasmin-like protein (152 aa).

Residues 109 to 128 (EVVDMEEDDEEDDVAEDEED) are compositionally biased toward acidic residues. The tract at residues 109–152 (EVVDMEEDDEEDDVAEDEEDEHPKKRAKIENAADGKNAKNNKKK) is disordered. Positions 136-145 (KIENAADGKN) are enriched in basic and acidic residues.

It belongs to the nucleoplasmin family. As to quaternary structure, decamer formed by two pentameric rings associated in a head-to-head fashion.

The protein resides in the nucleus. Functionally, binds to core histones and functions in the ATP-facilitated assembly of approximately regularly spaced nucleosomal arrays. May participate in parallel with other histone-binding proteins such as NAP-1. Inactive for chromatin assembly. In vitro it appears to form a high molecular mass aggregate with the core histones. The sequence is that of Nucleoplasmin-like protein (Nlp) from Drosophila melanogaster (Fruit fly).